Reading from the N-terminus, the 578-residue chain is Multidrug resistance-like ATP-binding protein MdlB (578 aa).

Residues 25 to 308 form the ABC transmembrane type-1 domain; that stretch reads LILGFTLLLF…ITSQQSIFQQ (284 aa). 6 helical membrane-spanning segments follow: residues 26–46, 59–79, 143–163, 166–186, 196–216, and 260–280; these read ILGF…PILI, VNYS…AAIL, SLFQ…ILEW, ACIA…YQYF, VYIA…DVIQ, and LILC…FEIG. The region spanning 339–573 is the ABC transporter domain; that stretch reads IKVKNLYFSY…KSYYKNMYYS (235 aa). Position 373-380 (373-380) interacts with ATP; it reads GRTGSGKS.

Belongs to the ABC transporter superfamily. Drug exporter-2 (TC 3.A.1.117) family.

It is found in the cell membrane. It catalyses the reaction ATP + H2O + xenobioticSide 1 = ADP + phosphate + xenobioticSide 2.. The sequence is that of Multidrug resistance-like ATP-binding protein MdlB (mdlB) from Buchnera aphidicola subsp. Baizongia pistaciae (strain Bp).